The sequence spans 388 residues: Calreticulin (388 aa).

Residues 1-17 (MQLSLLVGLVCFSAINA) form the signal peptide. Cysteines 103 and 135 form a disulfide. An alpha-D-glucoside contacts are provided by Y107, K109, Y126, and D133. 7 consecutive repeat copies span residues 189-200 (AESGELEADWDF), 208-219 (DPDAKKPEDWDE), 225-236 (DEDDKKPEDWDK), 242-253 (DPDAKKPEDWDD), 257-267 (GEWEPPMVDNP), 271-281 (GEWKPKQKKNP), and 285-295 (GKWIHPEIEIP). Residues 189 to 253 (AESGELEADW…DAKKPEDWDD (65 aa)) are 4 X approximate repeats. The disordered stretch occupies residues 193 to 282 (ELEADWDFLP…WKPKQKKNPA (90 aa)). A compositionally biased stretch (basic and acidic residues) spans 205–215 (KIKDPDAKKPE). Residues 216–227 (DWDEREFIDDED) show a composition bias toward acidic residues. Residues 228 to 249 (DKKPEDWDKPEHIPDPDAKKPE) are compositionally biased toward basic and acidic residues. A compositionally biased stretch (acidic residues) spans 250–259 (DWDDEMDGEW). Residues 257-295 (GEWEPPMVDNPEYKGEWKPKQKKNPAYKGKWIHPEIEIP) form a 3 X approximate repeats region. Position 315 (D315) interacts with an alpha-D-glucoside. The disordered stretch occupies residues 349 to 388 (REGEKKKGKKTKKQKKKEKNEKIKKEKMKKRKRANRKKKK). Composition is skewed to basic residues over residues 354-365 (KKGKKTKKQKKK) and 373-388 (KEKM…KKKK).

It belongs to the calreticulin family.

It localises to the endoplasmic reticulum lumen. In terms of biological role, molecular calcium-binding chaperone promoting folding, oligomeric assembly and quality control in the ER via the calreticulin/calnexin cycle. This lectin may interact transiently with almost all of the monoglucosylated glycoproteins that are synthesized in the ER. This is Calreticulin (crt-1) from Onchocerca volvulus.